A 287-amino-acid polypeptide reads, in one-letter code: CBK1 kinase activator protein MOB2 (287 aa).

Residues 1–89 form a disordered region; the sequence is MSFFNFKAFG…QQQEASERSE (89 aa). Tyr-33 is modified (phosphotyrosine). The span at 34 to 44 shows a compositional bias: low complexity; sequence SSPHSSNSRLS. The span at 45–56 shows a compositional bias: basic residues; sequence LRNKHHSPKRHS. Phosphoserine is present on Ser-59. Positions 63–83 are enriched in low complexity; that stretch reads QKSTPQSQQLTSTTPQSQQQE. Residue Thr-76 is modified to Phosphothreonine.

This sequence belongs to the MOB1/phocein family. In terms of assembly, interacts with protein kinase CBK1 to form the RAM CBK1-MOB2 kinase complex.

The protein resides in the nucleus. It is found in the cytoplasm. Its function is as follows. Functions as an activator subunit for the CBK1 protein kinase. Part of the regulation of ACE2 activity and cellular morphogenesis (RAM) signaling network. Required for coordinating polarized cell growth during interphase with the onset of mitosis. Required for mother/daughter cell separation after cytokinesis. Also has a role in the prevention of nuclear export of ACE2 from the daughter cell nucleus after mitotic exit. It coordinates ACE2-dependent transcription with mitotic exit network activation. The protein is CBK1 kinase activator protein MOB2 (MOB2) of Saccharomyces cerevisiae (strain ATCC 204508 / S288c) (Baker's yeast).